We begin with the raw amino-acid sequence, 199 residues long: Pyridoxal 5'-phosphate synthase subunit PdxT (199 aa).

52 to 54 is an L-glutamine binding site; sequence GES. Cys84 acts as the Nucleophile in catalysis. L-glutamine contacts are provided by residues Arg115 and 143 to 144; that span reads IR. Active-site charge relay system residues include His179 and Glu181.

It belongs to the glutaminase PdxT/SNO family. As to quaternary structure, in the presence of PdxS, forms a dodecamer of heterodimers. Only shows activity in the heterodimer.

It carries out the reaction aldehydo-D-ribose 5-phosphate + D-glyceraldehyde 3-phosphate + L-glutamine = pyridoxal 5'-phosphate + L-glutamate + phosphate + 3 H2O + H(+). The catalysed reaction is L-glutamine + H2O = L-glutamate + NH4(+). It participates in cofactor biosynthesis; pyridoxal 5'-phosphate biosynthesis. In terms of biological role, catalyzes the hydrolysis of glutamine to glutamate and ammonia as part of the biosynthesis of pyridoxal 5'-phosphate. The resulting ammonia molecule is channeled to the active site of PdxS. The sequence is that of Pyridoxal 5'-phosphate synthase subunit PdxT from Methanosarcina acetivorans (strain ATCC 35395 / DSM 2834 / JCM 12185 / C2A).